The chain runs to 282 residues: MNSSSSTMNEEPDALSVVNQLRDLAADPLNRRAIVQDQGCLPGLILFMDHPNPPVVHSALLALRYLAECRANREKMKGELGMMLSLQNVIQKSTTPGETKLLASEIYDILQSSNMADGDSFNEMNSRRRKAQFFLGTTNKRAKTVVLHIDGLDDTSRRNLCEEALLKIKGVISFTFQMAVQRCVVRIRSDLKAEALASAIASTKVMKAQQVVKSESGEEMLVPFQDTPVEVEQNTELPDYLPEDESPTKEQDKAVSRVGSHPEGGASWLSTAANFLSRSFYW.

At methionine 1 the chain carries N-acetylmethionine. The stretch at 39-81 (GCLPGLILFMDHPNPPVVHSALLALRYLAECRANREKMKGELG) is one ARM repeat. A Phosphothreonine modification is found at threonine 137. Residues serine 189, serine 246, serine 260, and serine 267 each carry the phosphoserine modification. The segment at 239–261 (DYLPEDESPTKEQDKAVSRVGSH) is disordered. A compositionally biased stretch (basic and acidic residues) spans 246 to 255 (SPTKEQDKAV).

Interacts with mitochondrial contact site and cristae organizing system (MICOS) complex components IMMT/MIC60 and MICOS10/MIC10. Interacts with mitochondrial outer membrane sorting assembly machinery (SAM) complex components SAMM50 and MTX1.

Its subcellular location is the cytoplasm. The protein resides in the mitochondrion. It localises to the mitochondrion outer membrane. Functionally, in association with mitochondrial contact site and cristae organizing system (MICOS) complex components and mitochondrial outer membrane sorting assembly machinery (SAM) complex components may regulate mitochondrial dynamics playing a role in determining mitochondrial length, distribution and motility. The protein is Armadillo repeat-containing protein 1 (ARMC1) of Bos taurus (Bovine).